The following is a 64-amino-acid chain: Large ribosomal subunit protein bL35 (64 aa).

Residues 1-15 show a composition bias toward basic residues; the sequence is MPKNKTHSGTAKRFR. Residues 1–27 form a disordered region; the sequence is MPKNKTHSGTAKRFRVTGSGKLRREQA.

This sequence belongs to the bacterial ribosomal protein bL35 family.

The protein is Large ribosomal subunit protein bL35 of Saccharopolyspora erythraea (strain ATCC 11635 / DSM 40517 / JCM 4748 / NBRC 13426 / NCIMB 8594 / NRRL 2338).